The primary structure comprises 136 residues: Alpha-2-purothionin (136 aa).

A signal peptide spans 1–27 (MGSKGLKGVMVCLLILGLVLEQVQVEG). 4 cysteine pairs are disulfide-bonded: Cys-30/Cys-66, Cys-31/Cys-58, Cys-39/Cys-56, and Cys-43/Cys-52. Residues 73–136 (LALESNSDEP…GDAGLTSLDA (64 aa)) constitute a propeptide, acidic domain.

It belongs to the plant thionin (TC 1.C.44) family. 4 C-C subfamily.

It localises to the secreted. Its function is as follows. Thionins are small plant proteins which are toxic to animal cells. They seem to exert their toxic effect at the level of the cell membrane. Their precise function is not known. This Triticum aestivum (Wheat) protein is Alpha-2-purothionin (THI1.2).